A 293-amino-acid chain; its full sequence is Glycine--tRNA ligase alpha subunit (293 aa).

It belongs to the class-II aminoacyl-tRNA synthetase family. In terms of assembly, tetramer of two alpha and two beta subunits.

Its subcellular location is the cytoplasm. It catalyses the reaction tRNA(Gly) + glycine + ATP = glycyl-tRNA(Gly) + AMP + diphosphate. The polypeptide is Glycine--tRNA ligase alpha subunit (Aliarcobacter butzleri (strain RM4018) (Arcobacter butzleri)).